The primary structure comprises 78 residues: Acyl carrier protein (78 aa).

Residues 2-77 (SDTAERIKKI…DAVSYIDEHK (76 aa)) enclose the Carrier domain. An O-(pantetheine 4'-phosphoryl)serine modification is found at serine 37.

This sequence belongs to the acyl carrier protein (ACP) family. In terms of processing, 4'-phosphopantetheine is transferred from CoA to a specific serine of apo-ACP by AcpS. This modification is essential for activity because fatty acids are bound in thioester linkage to the sulfhydryl of the prosthetic group.

Its subcellular location is the cytoplasm. It participates in lipid metabolism; fatty acid biosynthesis. Its function is as follows. Carrier of the growing fatty acid chain in fatty acid biosynthesis. This Zymomonas mobilis subsp. mobilis (strain ATCC 31821 / ZM4 / CP4) protein is Acyl carrier protein.